The sequence spans 346 residues: Phosphoribosylformylglycinamidine cyclo-ligase (346 aa).

This sequence belongs to the AIR synthase family.

The protein resides in the cytoplasm. It catalyses the reaction 2-formamido-N(1)-(5-O-phospho-beta-D-ribosyl)acetamidine + ATP = 5-amino-1-(5-phospho-beta-D-ribosyl)imidazole + ADP + phosphate + H(+). It participates in purine metabolism; IMP biosynthesis via de novo pathway; 5-amino-1-(5-phospho-D-ribosyl)imidazole from N(2)-formyl-N(1)-(5-phospho-D-ribosyl)glycinamide: step 2/2. The protein is Phosphoribosylformylglycinamidine cyclo-ligase of Bacillus pumilus (strain SAFR-032).